The following is an 80-amino-acid chain: Omega-conotoxin-like PuIA (80 aa).

Residues 1–22 (MKLTCVMIVAVLFLTAWTFVTA) form the signal peptide. A propeptide spanning residues 23–50 (DSIRALEDLFAKAPDEMENSGASPLNER) is cleaved from the precursor. Intrachain disulfides connect Cys52-Cys70, Cys59-Cys74, and Cys69-Cys78.

The protein belongs to the conotoxin O1 superfamily. As to expression, expressed by the venom duct.

It localises to the secreted. Functionally, omega-conotoxins act at presynaptic membranes, they bind and block voltage-gated calcium channels (Cav). In Conus pulicarius (Flea-bitten cone), this protein is Omega-conotoxin-like PuIA.